We begin with the raw amino-acid sequence, 117 residues long: UPF0125 protein VV0820 (117 aa).

The disordered stretch occupies residues 90–117 (RKRAEQAKESGAADPVTGGKPSPLRKAD).

The protein belongs to the UPF0125 (RnfH) family.

The protein is UPF0125 protein VV0820 of Vibrio vulnificus (strain YJ016).